A 339-amino-acid chain; its full sequence is Biotin synthase (339 aa).

In terms of domain architecture, Radical SAM core spans 55–288; the sequence is LSEGALHSCS…GKIIKFAAGR (234 aa). [4Fe-4S] cluster is bound by residues cysteine 73, cysteine 77, and cysteine 80. Residues cysteine 152, cysteine 213, and lysine 283 each coordinate [2Fe-2S] cluster.

This sequence belongs to the radical SAM superfamily. Biotin synthase family. As to quaternary structure, homodimer. The cofactor is [4Fe-4S] cluster. [2Fe-2S] cluster is required as a cofactor.

It carries out the reaction (4R,5S)-dethiobiotin + (sulfur carrier)-SH + 2 reduced [2Fe-2S]-[ferredoxin] + 2 S-adenosyl-L-methionine = (sulfur carrier)-H + biotin + 2 5'-deoxyadenosine + 2 L-methionine + 2 oxidized [2Fe-2S]-[ferredoxin]. It functions in the pathway cofactor biosynthesis; biotin biosynthesis; biotin from 7,8-diaminononanoate: step 2/2. In terms of biological role, catalyzes the conversion of dethiobiotin (DTB) to biotin by the insertion of a sulfur atom into dethiobiotin via a radical-based mechanism. This is Biotin synthase from Chlorobium phaeobacteroides (strain BS1).